A 635-amino-acid chain; its full sequence is Threonine--tRNA ligase (635 aa).

In terms of domain architecture, TGS spans 1–61 (MIQITLPDAS…EKDSALSIIT (61 aa)). Positions 242–533 (DHRKLGKELD…LIEEHAGALP (292 aa)) are catalytic. Zn(2+) contacts are provided by Cys-333, His-384, and His-510.

The protein belongs to the class-II aminoacyl-tRNA synthetase family. As to quaternary structure, homodimer. Zn(2+) serves as cofactor.

It is found in the cytoplasm. It catalyses the reaction tRNA(Thr) + L-threonine + ATP = L-threonyl-tRNA(Thr) + AMP + diphosphate + H(+). Functionally, catalyzes the attachment of threonine to tRNA(Thr) in a two-step reaction: L-threonine is first activated by ATP to form Thr-AMP and then transferred to the acceptor end of tRNA(Thr). Also edits incorrectly charged L-seryl-tRNA(Thr). The protein is Threonine--tRNA ligase of Polaromonas sp. (strain JS666 / ATCC BAA-500).